Reading from the N-terminus, the 361-residue chain is Tyrosine--tRNA ligase (361 aa).

Tyr36, Tyr162, Gln166, Asp169, and Gln184 together coordinate L-tyrosine. A 'KMSKS' region motif is present at residues 236–240 (KMSKS). ATP is bound at residue Lys239.

Belongs to the class-I aminoacyl-tRNA synthetase family. TyrS type 4 subfamily. Homodimer.

Its subcellular location is the cytoplasm. The enzyme catalyses tRNA(Tyr) + L-tyrosine + ATP = L-tyrosyl-tRNA(Tyr) + AMP + diphosphate + H(+). Catalyzes the attachment of tyrosine to tRNA(Tyr) in a two-step reaction: tyrosine is first activated by ATP to form Tyr-AMP and then transferred to the acceptor end of tRNA(Tyr). This chain is Tyrosine--tRNA ligase, found in Saccharolobus islandicus (strain Y.N.15.51 / Yellowstone #2) (Sulfolobus islandicus).